Here is a 135-residue protein sequence, read N- to C-terminus: Small ribosomal subunit protein uS9 (135 aa).

A disordered region spans residues 96 to 135; it reads SADNRKPLKTEGHLSRDPRAKERRKYGLKKARKAPQFSKR. Residues 97–115 are compositionally biased toward basic and acidic residues; that stretch reads ADNRKPLKTEGHLSRDPRA. A compositionally biased stretch (basic residues) spans 116–135; the sequence is KERRKYGLKKARKAPQFSKR.

This sequence belongs to the universal ribosomal protein uS9 family.

This is Small ribosomal subunit protein uS9 from Prochlorococcus marinus (strain MIT 9303).